The chain runs to 248 residues: 23S rRNA (guanosine-2'-O-)-methyltransferase RlmB (248 aa).

Residues glycine 198, leucine 218, and leucine 227 each contribute to the S-adenosyl-L-methionine site.

The protein belongs to the class IV-like SAM-binding methyltransferase superfamily. RNA methyltransferase TrmH family. RlmB subfamily.

It localises to the cytoplasm. The catalysed reaction is guanosine(2251) in 23S rRNA + S-adenosyl-L-methionine = 2'-O-methylguanosine(2251) in 23S rRNA + S-adenosyl-L-homocysteine + H(+). In terms of biological role, specifically methylates the ribose of guanosine 2251 in 23S rRNA. This chain is 23S rRNA (guanosine-2'-O-)-methyltransferase RlmB, found in Pseudomonas putida (strain ATCC 47054 / DSM 6125 / CFBP 8728 / NCIMB 11950 / KT2440).